Here is a 425-residue protein sequence, read N- to C-terminus: Serine--tRNA ligase (425 aa).

Position 229-231 (Thr229–Glu231) interacts with L-serine. ATP contacts are provided by residues Arg259–Glu261 and Val275. Glu282 provides a ligand contact to L-serine. Glu349–Ser352 contributes to the ATP binding site. Thr384 serves as a coordination point for L-serine.

Belongs to the class-II aminoacyl-tRNA synthetase family. Type-1 seryl-tRNA synthetase subfamily. Homodimer. The tRNA molecule binds across the dimer.

The protein resides in the cytoplasm. The enzyme catalyses tRNA(Ser) + L-serine + ATP = L-seryl-tRNA(Ser) + AMP + diphosphate + H(+). The catalysed reaction is tRNA(Sec) + L-serine + ATP = L-seryl-tRNA(Sec) + AMP + diphosphate + H(+). It functions in the pathway aminoacyl-tRNA biosynthesis; selenocysteinyl-tRNA(Sec) biosynthesis; L-seryl-tRNA(Sec) from L-serine and tRNA(Sec): step 1/1. In terms of biological role, catalyzes the attachment of serine to tRNA(Ser). Is also able to aminoacylate tRNA(Sec) with serine, to form the misacylated tRNA L-seryl-tRNA(Sec), which will be further converted into selenocysteinyl-tRNA(Sec). This chain is Serine--tRNA ligase, found in Borreliella burgdorferi (strain ATCC 35210 / DSM 4680 / CIP 102532 / B31) (Borrelia burgdorferi).